A 237-amino-acid chain; its full sequence is Ribose-5-phosphate isomerase A (237 aa).

Residues 28–31 (SGST), 83–86 (DGAD), and 97–100 (KGRG) each bind substrate. Residue Glu-106 is the Proton acceptor of the active site. Lys-124 is a binding site for substrate.

It belongs to the ribose 5-phosphate isomerase family. In terms of assembly, homodimer.

The enzyme catalyses aldehydo-D-ribose 5-phosphate = D-ribulose 5-phosphate. It participates in carbohydrate degradation; pentose phosphate pathway; D-ribose 5-phosphate from D-ribulose 5-phosphate (non-oxidative stage): step 1/1. Catalyzes the reversible conversion of ribose-5-phosphate to ribulose 5-phosphate. This Thermomicrobium roseum (strain ATCC 27502 / DSM 5159 / P-2) protein is Ribose-5-phosphate isomerase A.